The sequence spans 153 residues: MAEEHDEAVRVAELRKKRSFRTFAYRGVELEQLLDLSAEQLVDLFHARARRRMLRGLGPNASRFIRKLRKAKTEAPLNEKPATVKTHLRNMIILPEMVGSVVGIYNGKLFNQVEIRPEMIGHYLGEFSITYKPTKHGRPGIGATHSSRFIPLK.

This sequence belongs to the universal ribosomal protein uS19 family. As to quaternary structure, component of the small ribosomal subunit (SSU). Mature yeast ribosomes consist of a small (40S) and a large (60S) subunit. The 40S small subunit contains 1 molecule of ribosomal RNA (18S rRNA) and at least 33 different proteins. The large 60S subunit contains 3 rRNA molecules (25S, 5.8S and 5S rRNA) and at least 46 different proteins.

It localises to the cytoplasm. It is found in the nucleus. Its subcellular location is the nucleolus. Its function is as follows. Component of the ribosome, a large ribonucleoprotein complex responsible for the synthesis of proteins in the cell. The small ribosomal subunit (SSU) binds messenger RNAs (mRNAs) and translates the encoded message by selecting cognate aminoacyl-transfer RNA (tRNA) molecules. The large subunit (LSU) contains the ribosomal catalytic site termed the peptidyl transferase center (PTC), which catalyzes the formation of peptide bonds, thereby polymerizing the amino acids delivered by tRNAs into a polypeptide chain. The nascent polypeptides leave the ribosome through a tunnel in the LSU and interact with protein factors that function in enzymatic processing, targeting, and the membrane insertion of nascent chains at the exit of the ribosomal tunnel. uS19 is involved in the nuclear export of the small ribosomal subunit precursor. Has a role in the late stage of the assembly of pre-40S particles within the nucleus and controls their export to the cytoplasm. This is Small ribosomal subunit protein uS19A (rps1501) from Schizosaccharomyces pombe (strain 972 / ATCC 24843) (Fission yeast).